Reading from the N-terminus, the 348-residue chain is Spermatogenesis-associated protein 32 (348 aa).

A compositionally biased stretch (basic and acidic residues) spans 27 to 36 (YHHHHHPLED). The tract at residues 27–61 (YHHHHHPLEDNKDEDNEMGTELSSMKPPPKVDPDP) is disordered. S149 and S152 each carry phosphoserine. Residues 308–329 (APATSPELQEDKDDSVPGTKKG) form a disordered region. The residue at position 330 (T330) is a Phosphothreonine.

As to quaternary structure, interacts with syntaxin-1 and ACTB. In terms of tissue distribution, abundantly expressed in testes. Expressed in germ cells, but not in Sertoli or Leydig cells of the adult testis. Localized at the acrosomal region of the round and elongated spermatids at stages VIII-X.

This chain is Spermatogenesis-associated protein 32 (Spata32), found in Rattus norvegicus (Rat).